The sequence spans 185 residues: ATP synthase subunit b 2 (185 aa).

The tract at residues 1–23 (MAEGHGDAKGATAHTAADGGHKA) is disordered. Low complexity predominate over residues 9 to 18 (KGATAHTAAD). The chain crosses the membrane as a helical span at residues 37–57 (LVSLTIAFVALYLIVSKIILP).

It belongs to the ATPase B chain family. In terms of assembly, F-type ATPases have 2 components, F(1) - the catalytic core - and F(0) - the membrane proton channel. F(1) has five subunits: alpha(3), beta(3), gamma(1), delta(1), epsilon(1). F(0) has three main subunits: a(1), b(2) and c(10-14). The alpha and beta chains form an alternating ring which encloses part of the gamma chain. F(1) is attached to F(0) by a central stalk formed by the gamma and epsilon chains, while a peripheral stalk is formed by the delta and b chains.

The protein resides in the cell inner membrane. Functionally, f(1)F(0) ATP synthase produces ATP from ADP in the presence of a proton or sodium gradient. F-type ATPases consist of two structural domains, F(1) containing the extramembraneous catalytic core and F(0) containing the membrane proton channel, linked together by a central stalk and a peripheral stalk. During catalysis, ATP synthesis in the catalytic domain of F(1) is coupled via a rotary mechanism of the central stalk subunits to proton translocation. In terms of biological role, component of the F(0) channel, it forms part of the peripheral stalk, linking F(1) to F(0). The b'-subunit is a diverged and duplicated form of b found in plants and photosynthetic bacteria. This chain is ATP synthase subunit b 2 (atpF2), found in Rhodopseudomonas palustris (strain BisB5).